Reading from the N-terminus, the 254-residue chain is Probable glucose-1-phosphate cytidylyltransferase (254 aa).

Residues 6-10 (LCGGK), 11-13 (GTR), lysine 23, threonine 103, arginine 108, and glycine 126 each bind substrate. Positions 127 and 232 each coordinate Mg(2+).

Belongs to the glucose-1-phosphate cytidylyltransferase family. Mg(2+) is required as a cofactor.

It carries out the reaction alpha-D-glucose 1-phosphate + CTP + H(+) = CDP-D-glucose + diphosphate. Catalyzes the transfer of a CMP moiety from CTP to glucose 1-phosphate. This chain is Probable glucose-1-phosphate cytidylyltransferase (yfnH), found in Bacillus subtilis (strain 168).